The chain runs to 118 residues: Large ribosomal subunit protein uL18 (118 aa).

Residues 1–26 (MISKPDKNKIRQKRHRRVRGKLSGTA) form a disordered region. Positions 10-20 (IRQKRHRRVRG) are enriched in basic residues.

Belongs to the universal ribosomal protein uL18 family. Part of the 50S ribosomal subunit; part of the 5S rRNA/L5/L18/L25 subcomplex. Contacts the 5S and 23S rRNAs.

In terms of biological role, this is one of the proteins that bind and probably mediate the attachment of the 5S RNA into the large ribosomal subunit, where it forms part of the central protuberance. This is Large ribosomal subunit protein uL18 from Streptococcus equi subsp. zooepidemicus (strain H70).